A 393-amino-acid polypeptide reads, in one-letter code: DNA-directed RNA polymerase subunit Rpo1C (393 aa).

The protein belongs to the RNA polymerase beta' chain family. As to quaternary structure, part of the RNA polymerase complex.

It localises to the cytoplasm. It catalyses the reaction RNA(n) + a ribonucleoside 5'-triphosphate = RNA(n+1) + diphosphate. DNA-dependent RNA polymerase (RNAP) catalyzes the transcription of DNA into RNA using the four ribonucleoside triphosphates as substrates. Forms part of the jaw domain. This is DNA-directed RNA polymerase subunit Rpo1C from Thermococcus celer.